The sequence spans 147 residues: MFNRIMVPVDGSKGAVKALEKGVGLQQLTGAELYILCVFKHHSLLEASLSMVRPEQLDIPDDALKDYATEIAVQAKTRATELGVPADKVRAFVKGGRPSRTIVRFARKRECDLVVIGAQGTNGDKSLLLGSVAQRVAGSAHCPVLVV.

ATP-binding positions include 8-10 (PVD), Val-38, 117-122 (GAQGTN), and 131-133 (SVA).

This sequence belongs to the universal stress protein A family. As to quaternary structure, homodimer or homotetramer; in equilibrium. The dimer/tetramer ratio is ATP-dependent. ATP stabilizes dimer-dimer complexes, with one ATP molecule bound to each monomer.

The protein localises to the cytoplasm. ATP-binding protein that negatively regulates activity of the tripartite ATP-independent periplasmic (TRAP) ectoine transport system TeaABC. May regulate uptake according to the ATP status of the cell. In Halomonas elongata (strain ATCC 33173 / DSM 2581 / NBRC 15536 / NCIMB 2198 / 1H9), this protein is TRAP-T-associated universal stress protein TeaD (teaD).